The sequence spans 220 residues: MAYRDQPLGELALSIPRASALFRKYDMDYCCGGKQTLARAAARKELDVDVIEAELAKLAEQPIEKDWRSAPLAEIIDHIIVRYHDRHREQLPELILQATKVERVHADKPSVPKGLTKYLTMLHEELSSHMMKEEQILFPMIKQGMGSQAMGPISVMESEHDEAGELLEVIKHTTNNVTPPPEACTTWKAMYNGINELIDDLMEHISLENNILFPRALAGE.

This sequence belongs to the RIC family. YtfE subfamily. As to quaternary structure, homodimer.

It is found in the cytoplasm. Di-iron-containing protein involved in the repair of iron-sulfur clusters damaged by oxidative and nitrosative stress conditions. In Escherichia coli O81 (strain ED1a), this protein is Iron-sulfur cluster repair protein YtfE.